Consider the following 495-residue polypeptide: Leucine aminopeptidase 2 (495 aa).

The N-terminal stretch at 1-21 (MKTQLLSLGVALTAISQGVIA) is a signal peptide. The region spanning 124-218 (PPADKITAEL…ADGKNLASLV (95 aa)) is the PA domain. N-linked (GlcNAc...) asparagine glycosylation is found at Asn142 and Asn235. Positions 259 and 271 each coordinate Zn(2+). An N-linked (GlcNAc...) asparagine glycan is attached at Asn272. Glu303 serves as the catalytic Proton acceptor. Zn(2+) contacts are provided by Glu304 and Asp332. Asn352 is a glycosylation site (N-linked (GlcNAc...) asparagine). Zn(2+) is bound at residue His430. The segment at 464–495 (GFPTRPKTGKRDVSPRGQSMPGGGCGHHSVFM) is disordered.

The protein belongs to the peptidase M28 family. M28A subfamily. In terms of assembly, monomer. Zn(2+) is required as a cofactor.

The protein resides in the secreted. In terms of biological role, extracellular aminopeptidase that releases a wide variety of amino acids from natural peptides and contributes to pathogenicity. The sequence is that of Leucine aminopeptidase 2 (LAP2) from Arthroderma otae (strain ATCC MYA-4605 / CBS 113480) (Microsporum canis).